The following is a 217-amino-acid chain: Octanoyltransferase (217 aa).

One can recognise a BPL/LPL catalytic domain in the interval serine 32–histidine 207. Substrate is bound by residues arginine 71–histidine 78, serine 138–glycine 140, and glycine 151–alanine 153. The Acyl-thioester intermediate role is filled by cysteine 169.

This sequence belongs to the LipB family.

The protein resides in the cytoplasm. The catalysed reaction is octanoyl-[ACP] + L-lysyl-[protein] = N(6)-octanoyl-L-lysyl-[protein] + holo-[ACP] + H(+). Its pathway is protein modification; protein lipoylation via endogenous pathway; protein N(6)-(lipoyl)lysine from octanoyl-[acyl-carrier-protein]: step 1/2. Functionally, catalyzes the transfer of endogenously produced octanoic acid from octanoyl-acyl-carrier-protein onto the lipoyl domains of lipoate-dependent enzymes. Lipoyl-ACP can also act as a substrate although octanoyl-ACP is likely to be the physiological substrate. The polypeptide is Octanoyltransferase (Shewanella sp. (strain W3-18-1)).